Here is a 248-residue protein sequence, read N- to C-terminus: Mannose-binding protein C (248 aa).

An N-terminal signal peptide occupies residues 1-20; that stretch reads MSLFPSLPLLLLSVVATSYS. Residues 42 to 99 enclose the Collagen-like domain; the sequence is GINGFPGKDGRDGTKGEKGEPGQGLRGLQGPPGKLGPPGNPGPSGSPGPKGQKGDPGE. The disordered stretch occupies residues 43–111; the sequence is INGFPGKDGR…DCDSSLAASE (69 aa). Residue Pro-47 is modified to 4-hydroxyproline. The segment covering 49-61 has biased composition (basic and acidic residues); the sequence is KDGRDGTKGEKGE. 4 positions are modified to 4-hydroxyproline: Pro-73, Pro-79, Pro-82, and Pro-88. The segment covering 75 to 87 has biased composition (pro residues); the sequence is KLGPPGNPGPSGS. A coiled-coil region spans residues 112-130; it reads RKALQTEMAHIKKWLTFSL. Positions 134–245 constitute a C-type lectin domain; it reads VGNKFFLTNG…CSSSHLALCE (112 aa). 2 cysteine pairs are disulfide-bonded: Cys-155–Cys-244 and Cys-222–Cys-236.

Oligomeric complex of 3 or more homotrimers. Interacts with MASP1 and MASP2. Interacts with MEP1A and MEP1B and may inhibit their catalytic activity. Post-translationally, hydroxylation on proline residues within the sequence motif, GXPG, is most likely to be 4-hydroxy as this fits the requirement for 4-hydroxylation in vertebrates.

The protein resides in the secreted. Functionally, calcium-dependent lectin involved in innate immune defense. Binds mannose, fucose and N-acetylglucosamine on different microorganisms and activates the lectin complement pathway. Binds to late apoptotic cells, as well as to apoptotic blebs and to necrotic cells, but not to early apoptotic cells, facilitating their uptake by macrophages. The sequence is that of Mannose-binding protein C (MBL2) from Trachypithecus obscurus (Dusky leaf-monkey).